A 560-amino-acid polypeptide reads, in one-letter code: MSKTQEFRPLTLPPKLSLSDFNEFIQDIIRIVGSENVEVISSKDQIVDGSYMKPTHTHDPHHVMDQDYFLASAIVAPRNVADVQSIVGLANKFSFPLWPISIGRNSGYGGAAPRVSGSVVLDMGKNMNRVLEVNVEGAYCVVEPGVTYHDLHNYLEANNLRDKLWLDVPDLGGGSVLGNAVERGVGYTPYGDHWMMHSGMEVVLANGELLRTGMGALPDPKRPETMGLKPEDQPWSKIAHLFPYGFGPYIDGLFSQSNMGIVTKIGIWLMPNPRGYQSYLITLPKDGDLKQAVDIIRPLRLGMALQNVPTIRHILLDAAVLGDKRSYSSRTEPLSDEELDKIAKQLNLGRWNFYGALYGPEPIRRVLWETIKDAFSAIPGVKFYFPEDTPENSVLRVRDKTMQGIPTYDELKWIDWLPNGAHLFFSPIAKVSGEDAMMQYAVTKKRCQEAGLDFIGTFTVGMREMHHIVCIVFNKKDLIQKRKVQWLMRTLIDDCAANGWGEYRTHLAFMDQIMETYNWNNSSFLRFNEVLKNAVDPNGIIAPGKSGVWPSQYSHVTWKL.

One can recognise an FAD-binding PCMH-type domain in the interval 67–272 (DYFLASAIVA…TKIGIWLMPN (206 aa)). Tyr108 is an active-site residue. His422 carries the post-translational modification Tele-8alpha-FAD histidine. Residues Tyr503 and Arg504 contribute to the active site.

To bacterial flavocytochrome p-cresol methyl hydroxylase. In terms of assembly, homooctamer (tetramer of tightly interacting dimers). FAD is required as a cofactor.

The protein localises to the peroxisome. It is found in the cytoplasm. The enzyme catalyses 4-hydroxy-3-methoxy-benzenemethanol + O2 = vanillin + H2O2. Competitively inhibited by cinnamyl and coniferyl alcohols and by isoeugenol. Functionally, catalyzes the conversion of vanillin alcohol to vanillin, and also the conversion of a wide range of phenolic compounds bearing side chains of variable size at the para position of the aromatic ring. Crucial for the degradation of the secondary metabolites derived from the degradation of the lignin. Catalyzes besides the oxidation of 4-hydroxybenzyl alcohols, the oxidative deamination of 4-hydroxybenzylamines, the oxidative demethylation of 4-(methoxy-methyl)phenols and the oxidative hydration of 4-allylphenols. Most active with 4-allylphenols. The protein is Vanillyl-alcohol oxidase (VAOA) of Penicillium simplicissimum.